The sequence spans 356 residues: UDP-N-acetylglucosamine--N-acetylmuramyl-(pentapeptide) pyrophosphoryl-undecaprenol N-acetylglucosamine transferase (356 aa).

Residues 14–16 (TGG), asparagine 126, arginine 162, serine 190, isoleucine 244, and glutamine 289 each bind UDP-N-acetyl-alpha-D-glucosamine.

Belongs to the glycosyltransferase 28 family. MurG subfamily.

It localises to the cell inner membrane. The enzyme catalyses di-trans,octa-cis-undecaprenyl diphospho-N-acetyl-alpha-D-muramoyl-L-alanyl-D-glutamyl-meso-2,6-diaminopimeloyl-D-alanyl-D-alanine + UDP-N-acetyl-alpha-D-glucosamine = di-trans,octa-cis-undecaprenyl diphospho-[N-acetyl-alpha-D-glucosaminyl-(1-&gt;4)]-N-acetyl-alpha-D-muramoyl-L-alanyl-D-glutamyl-meso-2,6-diaminopimeloyl-D-alanyl-D-alanine + UDP + H(+). The protein operates within cell wall biogenesis; peptidoglycan biosynthesis. Functionally, cell wall formation. Catalyzes the transfer of a GlcNAc subunit on undecaprenyl-pyrophosphoryl-MurNAc-pentapeptide (lipid intermediate I) to form undecaprenyl-pyrophosphoryl-MurNAc-(pentapeptide)GlcNAc (lipid intermediate II). The chain is UDP-N-acetylglucosamine--N-acetylmuramyl-(pentapeptide) pyrophosphoryl-undecaprenol N-acetylglucosamine transferase from Cupriavidus necator (strain ATCC 17699 / DSM 428 / KCTC 22496 / NCIMB 10442 / H16 / Stanier 337) (Ralstonia eutropha).